Here is a 161-residue protein sequence, read N- to C-terminus: Nucleotide-binding protein HCH_04620 (161 aa).

Belongs to the YajQ family.

Its function is as follows. Nucleotide-binding protein. The polypeptide is Nucleotide-binding protein HCH_04620 (Hahella chejuensis (strain KCTC 2396)).